The chain runs to 92 residues: Acylphosphatase (92 aa).

In terms of domain architecture, Acylphosphatase-like spans T5–P90. Active-site residues include R20 and N38.

The protein belongs to the acylphosphatase family.

The catalysed reaction is an acyl phosphate + H2O = a carboxylate + phosphate + H(+). This chain is Acylphosphatase (acyP), found in Cupriavidus necator (strain ATCC 17699 / DSM 428 / KCTC 22496 / NCIMB 10442 / H16 / Stanier 337) (Ralstonia eutropha).